Here is a 102-residue protein sequence, read N- to C-terminus: Small ribosomal subunit protein uS10 (102 aa).

It belongs to the universal ribosomal protein uS10 family. Part of the 30S ribosomal subunit.

Involved in the binding of tRNA to the ribosomes. The chain is Small ribosomal subunit protein uS10 from Arthrobacter sp. (strain FB24).